Reading from the N-terminus, the 135-residue chain is Large ribosomal subunit protein uL16 (135 aa).

It belongs to the universal ribosomal protein uL16 family. In terms of assembly, part of the 50S ribosomal subunit.

Its function is as follows. Binds 23S rRNA and is also seen to make contacts with the A and possibly P site tRNAs. This is Large ribosomal subunit protein uL16 from Coprothermobacter proteolyticus (strain ATCC 35245 / DSM 5265 / OCM 4 / BT).